Reading from the N-terminus, the 225-residue chain is Ribonuclease 3 (225 aa).

The region spanning 5–127 (IEKLTRQLGY…IIGAVYLDSD (123 aa)) is the RNase III domain. Glutamate 40 serves as a coordination point for Mg(2+). Residue aspartate 44 is part of the active site. Mg(2+)-binding residues include aspartate 113 and glutamate 116. Residue glutamate 116 is part of the active site. The 71-residue stretch at 154–224 (DPKTRLQEFL…AELALEQLTN (71 aa)) folds into the DRBM domain.

Belongs to the ribonuclease III family. As to quaternary structure, homodimer. It depends on Mg(2+) as a cofactor.

Its subcellular location is the cytoplasm. The enzyme catalyses Endonucleolytic cleavage to 5'-phosphomonoester.. Digests double-stranded RNA. Involved in the processing of primary rRNA transcript to yield the immediate precursors to the large and small rRNAs (23S and 16S). Processes some mRNAs, and tRNAs when they are encoded in the rRNA operon. Processes pre-crRNA and tracrRNA of type II CRISPR loci if present in the organism. The polypeptide is Ribonuclease 3 (Vibrio vulnificus (strain CMCP6)).